The following is a 65-amino-acid chain: Large ribosomal subunit protein bL35 (65 aa).

Basic residues predominate over residues 1–43 (MPKMKTRRGAAKRFAKTGSGKFKRRKQGLRHILTKKTAKRKSR). Residues 1-49 (MPKMKTRRGAAKRFAKTGSGKFKRRKQGLRHILTKKTAKRKSRLGQSAT) form a disordered region.

The protein belongs to the bacterial ribosomal protein bL35 family.

This is Large ribosomal subunit protein bL35 from Maridesulfovibrio salexigens (strain ATCC 14822 / DSM 2638 / NCIMB 8403 / VKM B-1763) (Desulfovibrio salexigens).